The sequence spans 668 residues: MSIEQTLDELKQQLNYHAYRYYVEDSPELPDAEYDRMMQQLLSIESEHPELVTVDSPSQRVGGEALDGFTQIQHEIPMLSLDNAFSDEELEAFEKRMNDRLISKPVSLFCCEPKLDGLAVSLLYVDGKLVQAGTRGDGTTGENITENVRTIRCIPLTLQGEGWPTRLEVRGEVFMPKAGFEALNERALKRGEKPFANPRNAAAGSLRQLDSKITATRPLSFYAYSVGVIEGGELETSHYQRFVQLKSWGLPMCEETKQCHSLTEVKAYYKDILERRDALKYEIDGVVIKVDDIALQEQLGFVARAPRWAIAYKFPAQEELTVLNDVEFQVGRTGAITPVAKLEPVFVGGVTVSNATLHNADEIARLGVHIGDTVIIRRAGDVIPQIVSVVEARRPTDSKAIVYPIHCPVCGSNLERVEGEAVTRCGAGLVCQAQRKEALKHFVSRKALDVDGLGDKVVEQLVDKEMVETPADLFKLSAGLLTVLERMGPKSAQNVVDALNKAKATTLPRFLYSLGIREVGEATAANLAAHFYTLEAIQVATFEQLIEVSDVGDIVAKHVLNFFAEPHNKTVIEDLQEMGIHWPEIKALDESVPQPLAGKVVVLTGTLHKLKRNEAKAALQELGAKVTGSVSKKTDILFAGEAAGSKLAKAEELGVEVMNEEQLIELLN.

NAD(+) contacts are provided by residues 31 to 35 (DAEYD), 80 to 81 (SL), and glutamate 112. Lysine 114 serves as the catalytic N6-AMP-lysine intermediate. Arginine 135, glutamate 172, lysine 289, and lysine 313 together coordinate NAD(+). 4 residues coordinate Zn(2+): cysteine 407, cysteine 410, cysteine 425, and cysteine 431. Positions 591–668 (SVPQPLAGKV…NEEQLIELLN (78 aa)) constitute a BRCT domain.

It belongs to the NAD-dependent DNA ligase family. LigA subfamily. It depends on Mg(2+) as a cofactor. Mn(2+) is required as a cofactor.

It catalyses the reaction NAD(+) + (deoxyribonucleotide)n-3'-hydroxyl + 5'-phospho-(deoxyribonucleotide)m = (deoxyribonucleotide)n+m + AMP + beta-nicotinamide D-nucleotide.. Functionally, DNA ligase that catalyzes the formation of phosphodiester linkages between 5'-phosphoryl and 3'-hydroxyl groups in double-stranded DNA using NAD as a coenzyme and as the energy source for the reaction. It is essential for DNA replication and repair of damaged DNA. The chain is DNA ligase from Aliivibrio fischeri (strain ATCC 700601 / ES114) (Vibrio fischeri).